Consider the following 100-residue polypeptide: Urease subunit gamma (100 aa).

Belongs to the urease gamma subunit family. As to quaternary structure, heterotrimer of UreA (gamma), UreB (beta) and UreC (alpha) subunits. Three heterotrimers associate to form the active enzyme.

It localises to the cytoplasm. It catalyses the reaction urea + 2 H2O + H(+) = hydrogencarbonate + 2 NH4(+). It functions in the pathway nitrogen metabolism; urea degradation; CO(2) and NH(3) from urea (urease route): step 1/1. The protein is Urease subunit gamma of Clostridium perfringens.